The chain runs to 224 residues: Proline/serine-rich protein C17A5.10 (224 aa).

Over residues 1-10 the composition is skewed to pro residues; that stretch reads MTDDSVPPPS. The interval 1 to 110 is disordered; sequence MTDDSVPPPS…SNYNTAKPPY (110 aa). Over residues 31-52 the composition is skewed to low complexity; that stretch reads TSTSAGHPSSSSSTLPNYAASS. Polar residues-rich tracts occupy residues 53 to 68, 77 to 94, and 101 to 110; these read LNSR…NAYS, PTSQ…STMY, and SNYNTAKPPY.

The protein belongs to the HUA1 family.

The protein resides in the cytoplasm. Its function is as follows. May be involved in assembly and disassembly of the actin cytoskeleton. This is Proline/serine-rich protein C17A5.10 from Schizosaccharomyces pombe (strain 972 / ATCC 24843) (Fission yeast).